The chain runs to 283 residues: Putative transposase InsK for insertion sequence element IS150 (283 aa).

Residues lysine 117–tyrosine 279 enclose the Integrase catalytic domain.

The protein belongs to the transposase IS3/IS150/IS904 family.

In terms of biological role, involved in the transposition of the insertion sequence IS150. The chain is Putative transposase InsK for insertion sequence element IS150 (insK) from Escherichia coli (strain K12).